The following is an 895-amino-acid chain: Androgen receptor (895 aa).

A modulating region spans residues 1–533 (MEVQLGLGRV…PIDYYFPPQK (533 aa)). Positions 1-562 (MEVQLGLGRV…GSCKVFFKRA (562 aa)) are interaction with ZNF318. 2 disordered regions span residues 33–150 (VIQN…LSLL) and 178–211 (QQQQ…YLEG). Low complexity-rich tracts occupy residues 44–81 (AASA…GSPQ) and 178–200 (QQQQ…ASGA). Ser-65 is subject to Phosphoserine; by CDK9. Residue Ser-79 is modified to Phosphoserine. The span at 201–211 (PTSSKDNYLEG) shows a compositional bias: polar residues. Tyr-208 carries the phosphotyrosine; by CSK modification. Ser-241 is modified (phosphoserine). Tyr-252 bears the Phosphotyrosine; by CSK and TNK2 mark. Phosphotyrosine; by CSK is present on residues Tyr-292, Tyr-331, Tyr-342, and Tyr-347. Tyr-348 carries the phosphotyrosine; by CSK and TNK2 modification. Lys-371 is covalently cross-linked (Glycyl lysine isopeptide (Lys-Gly) (interchain with G-Cter in SUMO)). At Tyr-378 the chain carries Phosphotyrosine; by CSK. Lys-496 participates in a covalent cross-link: Glycyl lysine isopeptide (Lys-Gly) (interchain with G-Cter in SUMO). Residues Tyr-510 and Tyr-527 each carry the phosphotyrosine; by CSK modification. Residues 527–894 (YYFPPQKTCL…GKVKPIYFHT (368 aa)) form an interaction with LPXN region. The nuclear receptor DNA-binding region spans 534–607 (TCLICGDEAS…AGMTLGARKL (74 aa)). 2 consecutive NR C4-type zinc fingers follow at residues 535–555 (CLIC…CGSC) and 571–595 (CASR…LRKC). The segment at 547-637 (YGALTCGSCK…TEETAQKLTV (91 aa)) is interaction with HIPK3. Residues 567–894 (QKYLCASRND…GKVKPIYFHT (328 aa)) form an interaction with CCAR1 region. The interval 600–894 (MTLGARKLKK…GKVKPIYFHT (295 aa)) is interaction with KAT7. Ser-626 is modified (phosphoserine; by STK4/MST1). In terms of domain architecture, NR LBD spans 644 to 875 (ECQPIFLNVL…DFPEMMAEII (232 aa)). Residues Asn-681 and Arg-728 each coordinate 17beta-hydroxy-5alpha-androstan-3-one. Residues Lys-821 and Lys-823 each participate in a glycyl lysine isopeptide (Lys-Gly) (interchain with G-Cter in ubiquitin) cross-link. Residue Thr-853 participates in 17beta-hydroxy-5alpha-androstan-3-one binding. Residue Tyr-891 is modified to Phosphotyrosine; by CSK.

The protein belongs to the nuclear hormone receptor family. NR3 subfamily. As to quaternary structure, binds DNA as a homodimer. Part of a ternary complex containing AR, EFCAB6/DJBP and PARK7. Interacts with HIPK3 and NR0B2 in the presence of androgen. The ligand binding domain interacts with KAT7/HBO1 in the presence of dihydrotestosterone. Interacts with EFCAB6/DJBP, PQBP1, RANBP9, RBAK, SPDEF, SRA1, TGFB1I1 and RREB1. Interacts with ZMIZ1/ZIMP10 and ZMIZ2/ZMIP7 which both enhance its transactivation activity. Interacts with SLC30A9 and RAD54L2/ARIP4. Interacts with MACROD1 (via macro domain). Interacts via the ligand-binding domain with LXXLL and FXXLF motifs from NCOA1, NCOA2, NCOA3 and MAGEA11. Interacts (via nuclear receptor DNA binding domain and nuclear receptor ligand binding domain) with NCOA4. The AR N-terminal poly-Gln region binds Ran resulting in enhancement of AR-mediated transactivation. Ran-binding decreases as the poly-Gln length increases. Interacts with HIP1 (via coiled coil domain). Interacts (via ligand-binding domain) with TRIM68. Interacts with TNK2. Interacts with USP26. Interacts with RNF6. Interacts (regulated by RNF6 probably through polyubiquitination) with RNF14; regulates AR transcriptional activity. Interacts with PRMT2 and TRIM24. Interacts with RACK1. Interacts with RANBP10; this interaction enhances dihydrotestosterone-induced AR transcriptional activity. Interacts with PRPF6 in a hormone-independent way; this interaction enhances dihydrotestosterone-induced AR transcriptional activity. Interacts with STK4/MST1. Interacts with ZIPK/DAPK3. Interacts with LPXN. Interacts with MAK. Part of a complex containing AR, MAK and NCOA3. Interacts with CRY1. Interacts with CCAR1 and GATA2. Interacts with ZNF318. Interacts with BUD31. Interacts with ARID4A. Interacts with ARID4B. Interacts (via NR LBD domain) with ZBTB7A; the interaction is direct and androgen-dependent. Interacts with NCOR1. Interacts with NCOR2. Interacts with CRY2 in a ligand-dependent manner. Phosphorylated in prostate cancer cells in response to several growth factors including EGF. Phosphorylation is induced by c-Src kinase (CSK). Tyr-510 is one of the major phosphorylation sites and an increase in phosphorylation and Src kinase activity is associated with prostate cancer progression. Phosphorylation by TNK2 enhances the DNA-binding and transcriptional activity. Phosphorylation at Ser-65 by CDK9 regulates AR promoter selectivity and cell growth. Post-translationally, sumoylated on Lys-371 (major) and Lys-496. Ubiquitinated. Deubiquitinated by USP26. 'Lys-6' and 'Lys-27'-linked polyubiquitination by RNF6 modulates AR transcriptional activity and specificity. In terms of processing, palmitoylated by ZDHHC7 and ZDHHC21. Palmitoylation is required for plasma membrane targeting and for rapid intracellular signaling via ERK and AKT kinases and cAMP generation.

The protein resides in the nucleus. The protein localises to the cytoplasm. Functionally, steroid hormone receptors are ligand-activated transcription factors that regulate eukaryotic gene expression and affect cellular proliferation and differentiation in target tissues. Transcription factor activity is modulated by bound coactivator and corepressor proteins like ZBTB7A that recruits NCOR1 and NCOR2 to the androgen response elements/ARE on target genes, negatively regulating androgen receptor signaling and androgen-induced cell proliferation. Transcription activation is also down-regulated by NR0B2. Activated, but not phosphorylated, by HIPK3 and ZIPK/DAPK3. The sequence is that of Androgen receptor (AR) from Macaca mulatta (Rhesus macaque).